Here is a 283-residue protein sequence, read N- to C-terminus: 4-diphosphocytidyl-2-C-methyl-D-erythritol kinase (283 aa).

The active site involves K10. 99-109 (PMGGGLGGGSS) provides a ligand contact to ATP. D141 is a catalytic residue.

It belongs to the GHMP kinase family. IspE subfamily. Homodimer.

It catalyses the reaction 4-CDP-2-C-methyl-D-erythritol + ATP = 4-CDP-2-C-methyl-D-erythritol 2-phosphate + ADP + H(+). Its pathway is isoprenoid biosynthesis; isopentenyl diphosphate biosynthesis via DXP pathway; isopentenyl diphosphate from 1-deoxy-D-xylulose 5-phosphate: step 3/6. In terms of biological role, catalyzes the phosphorylation of the position 2 hydroxy group of 4-diphosphocytidyl-2C-methyl-D-erythritol. The polypeptide is 4-diphosphocytidyl-2-C-methyl-D-erythritol kinase (Salmonella paratyphi C (strain RKS4594)).